The sequence spans 354 residues: Bifunctional transcriptional activator/DNA repair enzyme Ada (354 aa).

The methylphosphotriester-DNA--protein-cysteine methyltransferase stretch occupies residues 1–171 (MKKATCLTDD…SSSYYRKADE (171 aa)). A DNA-binding site is contributed by Thr34. The Nucleophile; methyl group acceptor from methylphosphotriester role is filled by Cys38. Zn(2+)-binding residues include Cys38 and Cys42. Arg43, Arg45, and Arg67 together coordinate DNA. Zn(2+)-binding residues include Cys69 and Cys72. Residues 85–183 (DKITHACRLL…GMTAKQFRHG (99 aa)) enclose the HTH araC/xylS-type domain. A DNA-binding region (H-T-H motif) is located at residues 102-121 (LEALADQVAMSPFHLHRLFK). The tract at residues 181–354 (RHGGENLAVR…LRREAENEER (174 aa)) is methylated-DNA--protein-cysteine methyltransferase. Cys321 (nucleophile; methyl group acceptor from either O6-methylguanine or O4-methylthymine) is an active-site residue.

This sequence in the C-terminal section; belongs to the MGMT family. Requires Zn(2+) as cofactor.

It catalyses the reaction (2'-deoxyribonucleoside 5'-methylphosphotriester)-DNA + L-cysteinyl-[protein] = 2'-deoxyribonucleotide-DNA + S-methyl-L-cysteinyl-[protein] + H(+). It carries out the reaction a 6-O-methyl-2'-deoxyguanosine in DNA + L-cysteinyl-[protein] = S-methyl-L-cysteinyl-[protein] + a 2'-deoxyguanosine in DNA. The enzyme catalyses a 4-O-methyl-thymidine in DNA + L-cysteinyl-[protein] = a thymidine in DNA + S-methyl-L-cysteinyl-[protein]. Involved in the adaptive response to alkylation damage in DNA caused by alkylating agents. Repairs O6-methylguanine (O6-MeG) and O4-methylthymine (O4-MeT) in DNA. Repairs the methylated nucleobase in DNA by stoichiometrically transferring the methyl group to a cysteine residue in the enzyme (Cys-321). Also specifically repairs the Sp diastereomer of DNA methylphosphotriester lesions by the same mechanism, although the methyl transfer occurs onto a different cysteine residue (Cys-38). Cannot demethylate the other diastereomer, Rp-methylphosphotriester. This is a suicide reaction: the enzyme is irreversibly inactivated. Functionally, the methylation of Ada by methylphosphotriesters in DNA leads to its activation as a transcriptional regulator that activates the transcription of its own gene, ada, and other alkylation resistance genes, alkA, alkB and aidB. The protein is Bifunctional transcriptional activator/DNA repair enzyme Ada (ada) of Escherichia coli (strain K12).